A 184-amino-acid polypeptide reads, in one-letter code: Peptide deformylase (184 aa).

Fe cation is bound by residues cysteine 111 and histidine 154. The active site involves glutamate 155. Histidine 158 contacts Fe cation.

It belongs to the polypeptide deformylase family. Fe(2+) serves as cofactor.

It carries out the reaction N-terminal N-formyl-L-methionyl-[peptide] + H2O = N-terminal L-methionyl-[peptide] + formate. Functionally, removes the formyl group from the N-terminal Met of newly synthesized proteins. Requires at least a dipeptide for an efficient rate of reaction. N-terminal L-methionine is a prerequisite for activity but the enzyme has broad specificity at other positions. The sequence is that of Peptide deformylase from Lactobacillus delbrueckii subsp. bulgaricus (strain ATCC 11842 / DSM 20081 / BCRC 10696 / JCM 1002 / NBRC 13953 / NCIMB 11778 / NCTC 12712 / WDCM 00102 / Lb 14).